Here is a 566-residue protein sequence, read N- to C-terminus: DNA ligase B (566 aa).

The N6-AMP-lysine intermediate role is filled by lysine 125.

Belongs to the NAD-dependent DNA ligase family. LigB subfamily.

It catalyses the reaction NAD(+) + (deoxyribonucleotide)n-3'-hydroxyl + 5'-phospho-(deoxyribonucleotide)m = (deoxyribonucleotide)n+m + AMP + beta-nicotinamide D-nucleotide.. Its function is as follows. Catalyzes the formation of phosphodiester linkages between 5'-phosphoryl and 3'-hydroxyl groups in double-stranded DNA using NAD as a coenzyme and as the energy source for the reaction. The polypeptide is DNA ligase B (Pseudomonas putida (strain GB-1)).